A 276-amino-acid polypeptide reads, in one-letter code: Eukaryotic translation initiation factor 3 subunit G-2 (276 aa).

The RRM domain maps to 196–274 (SAVRISNLSE…LILCVEWSKP (79 aa)).

The protein belongs to the eIF-3 subunit G family. As to quaternary structure, component of the eukaryotic translation initiation factor 3 (eIF-3) complex. The eIF-3 complex interacts with pix.

The protein localises to the cytoplasm. Its function is as follows. RNA-binding component of the eukaryotic translation initiation factor 3 (eIF-3) complex, which is involved in protein synthesis of a specialized repertoire of mRNAs and, together with other initiation factors, stimulates binding of mRNA and methionyl-tRNAi to the 40S ribosome. The eIF-3 complex specifically targets and initiates translation of a subset of mRNAs involved in cell proliferation. This subunit can bind 18S rRNA. The sequence is that of Eukaryotic translation initiation factor 3 subunit G-2 from Drosophila persimilis (Fruit fly).